Consider the following 256-residue polypeptide: MVALRLIPCLDVAHGRVVKGVNFVNLRDSGDPVELACRYSDEGADELVFLDIRASVENRNTLVDLVSRTAKSVKIPFTVGGGIDSVASINDLLRAGADKVSLNSSAVRNPDLVSKSSREFGNQCIVIAIDAKRKINKTDEWEVYVKGGRENTGIDVLSWAKKVEELGAGEILLTSMDGDGTQNGYDLHLTKSVANIVNLPVIASGGAGCLEDIYDVFIEGRASAALLASLLHDRKLSLREIKTFLLDKKLPIRPCE.

Catalysis depends on residues D11 and D130.

The protein belongs to the HisA/HisF family. Heterodimer of HisH and HisF.

Its subcellular location is the cytoplasm. The catalysed reaction is 5-[(5-phospho-1-deoxy-D-ribulos-1-ylimino)methylamino]-1-(5-phospho-beta-D-ribosyl)imidazole-4-carboxamide + L-glutamine = D-erythro-1-(imidazol-4-yl)glycerol 3-phosphate + 5-amino-1-(5-phospho-beta-D-ribosyl)imidazole-4-carboxamide + L-glutamate + H(+). The protein operates within amino-acid biosynthesis; L-histidine biosynthesis; L-histidine from 5-phospho-alpha-D-ribose 1-diphosphate: step 5/9. Its function is as follows. IGPS catalyzes the conversion of PRFAR and glutamine to IGP, AICAR and glutamate. The HisF subunit catalyzes the cyclization activity that produces IGP and AICAR from PRFAR using the ammonia provided by the HisH subunit. The polypeptide is Imidazole glycerol phosphate synthase subunit HisF (Prochlorococcus marinus (strain MIT 9301)).